A 62-amino-acid polypeptide reads, in one-letter code: Large ribosomal subunit protein uL30 (62 aa).

The protein belongs to the universal ribosomal protein uL30 family. As to quaternary structure, part of the 50S ribosomal subunit.

This Geobacillus thermodenitrificans (strain NG80-2) protein is Large ribosomal subunit protein uL30.